The following is a 208-amino-acid chain: Inner membrane-spanning protein YciB (208 aa).

The next 5 membrane-spanning stretches (helical) occupy residues 49–69 (APVL…ILWL), 78–98 (TMLW…IYFH), 105–125 (WKPT…ELVF), 150–170 (FSWV…AFNF), and 178–198 (FKLF…AFFL).

It belongs to the YciB family.

The protein resides in the cell inner membrane. Its function is as follows. Plays a role in cell envelope biogenesis, maintenance of cell envelope integrity and membrane homeostasis. The protein is Inner membrane-spanning protein YciB of Polaromonas naphthalenivorans (strain CJ2).